A 529-amino-acid polypeptide reads, in one-letter code: CTP synthase (529 aa).

Residues 1 to 266 (MTKYIIVTGG…TKKIFNKLGL (266 aa)) form an amidoligase domain region. CTP is bound at residue serine 13. Serine 13 provides a ligand contact to UTP. An ATP-binding site is contributed by 14–19 (SVGKGT). Tyrosine 54 is an L-glutamine binding site. Aspartate 71 provides a ligand contact to ATP. Mg(2+)-binding residues include aspartate 71 and glutamate 141. Residues 148 to 150 (DIE), 187 to 192 (KTKPLQ), and lysine 223 contribute to the CTP site. UTP is bound by residues 187–192 (KTKPLQ) and lysine 223. A Glutamine amidotransferase type-1 domain is found at 291–529 (KIALVGKYTK…FLNFLSVASA (239 aa)). Glycine 354 provides a ligand contact to L-glutamine. Cysteine 381 (nucleophile; for glutamine hydrolysis) is an active-site residue. L-glutamine contacts are provided by residues 382 to 385 (FGMQ), glutamate 405, and arginine 462. Residues histidine 506 and glutamate 508 contribute to the active site.

It belongs to the CTP synthase family. As to quaternary structure, homotetramer.

It catalyses the reaction UTP + L-glutamine + ATP + H2O = CTP + L-glutamate + ADP + phosphate + 2 H(+). The catalysed reaction is L-glutamine + H2O = L-glutamate + NH4(+). The enzyme catalyses UTP + NH4(+) + ATP = CTP + ADP + phosphate + 2 H(+). The protein operates within pyrimidine metabolism; CTP biosynthesis via de novo pathway; CTP from UDP: step 2/2. With respect to regulation, allosterically activated by GTP, when glutamine is the substrate; GTP has no effect on the reaction when ammonia is the substrate. The allosteric effector GTP functions by stabilizing the protein conformation that binds the tetrahedral intermediate(s) formed during glutamine hydrolysis. Inhibited by the product CTP, via allosteric rather than competitive inhibition. In terms of biological role, catalyzes the ATP-dependent amination of UTP to CTP with either L-glutamine or ammonia as the source of nitrogen. Regulates intracellular CTP levels through interactions with the four ribonucleotide triphosphates. The protein is CTP synthase of Sulfolobus acidocaldarius (strain ATCC 33909 / DSM 639 / JCM 8929 / NBRC 15157 / NCIMB 11770).